The sequence spans 155 residues: Transcriptional regulator MraZ (155 aa).

2 SpoVT-AbrB domains span residues 7-63 and 92-135; these read REQH…EPSV and LDQT…EPLR.

It belongs to the MraZ family. In terms of assembly, forms oligomers.

The protein resides in the cytoplasm. It is found in the nucleoid. The chain is Transcriptional regulator MraZ from Chlorobaculum tepidum (strain ATCC 49652 / DSM 12025 / NBRC 103806 / TLS) (Chlorobium tepidum).